The following is a 400-amino-acid chain: NADH dehydrogenase-like protein MT1860 (400 aa).

This sequence belongs to the NADH dehydrogenase family. FAD serves as cofactor.

This Mycobacterium tuberculosis (strain CDC 1551 / Oshkosh) protein is NADH dehydrogenase-like protein MT1860.